Reading from the N-terminus, the 215-residue chain is UPF0056 membrane protein BU267 (215 aa).

Transmembrane regions (helical) follow at residues 14–34 (FFIGLCALVNPIGMIPIFTTM), 56–76 (LILLISLFFGSNILNIFGISI), 81–101 (IAGGILIISIAFSMISGQFIK), 120–140 (VVPLAMPLIAGPGAISSTIVW), 150–170 (LFLCSLVIFLFSFVCWLCFEA), and 189–209 (IMGLLLMSLGIEFISTGIGAI).

Belongs to the UPF0056 (MarC) family.

It localises to the cell membrane. This Buchnera aphidicola subsp. Acyrthosiphon pisum (strain APS) (Acyrthosiphon pisum symbiotic bacterium) protein is UPF0056 membrane protein BU267.